The sequence spans 56 residues: Large ribosomal subunit protein eL40 (56 aa).

It belongs to the eukaryotic ribosomal protein eL40 family.

This is Large ribosomal subunit protein eL40 from Sulfurisphaera tokodaii (strain DSM 16993 / JCM 10545 / NBRC 100140 / 7) (Sulfolobus tokodaii).